The primary structure comprises 219 residues: Probable nicotinate-nucleotide adenylyltransferase (219 aa).

Belongs to the NadD family.

It carries out the reaction nicotinate beta-D-ribonucleotide + ATP + H(+) = deamido-NAD(+) + diphosphate. Its pathway is cofactor biosynthesis; NAD(+) biosynthesis; deamido-NAD(+) from nicotinate D-ribonucleotide: step 1/1. Functionally, catalyzes the reversible adenylation of nicotinate mononucleotide (NaMN) to nicotinic acid adenine dinucleotide (NaAD). The protein is Probable nicotinate-nucleotide adenylyltransferase of Pseudomonas putida (strain W619).